The following is a 190-amino-acid chain: Potassium-transporting ATPase KdpC subunit (190 aa).

The helical transmembrane segment at Thr10–Gly30 threads the bilayer.

Belongs to the KdpC family. The system is composed of three essential subunits: KdpA, KdpB and KdpC.

It localises to the cell inner membrane. Part of the high-affinity ATP-driven potassium transport (or Kdp) system, which catalyzes the hydrolysis of ATP coupled with the electrogenic transport of potassium into the cytoplasm. This subunit acts as a catalytic chaperone that increases the ATP-binding affinity of the ATP-hydrolyzing subunit KdpB by the formation of a transient KdpB/KdpC/ATP ternary complex. This chain is Potassium-transporting ATPase KdpC subunit, found in Shigella flexneri serotype 5b (strain 8401).